We begin with the raw amino-acid sequence, 292 residues long: Phosphatidylserine decarboxylase proenzyme (292 aa).

Catalysis depends on charge relay system; for autoendoproteolytic cleavage activity residues Asp89, His146, and Ser252. The Schiff-base intermediate with substrate; via pyruvic acid; for decarboxylase activity role is filled by Ser252. Position 252 is a pyruvic acid (Ser); by autocatalysis (Ser252).

This sequence belongs to the phosphatidylserine decarboxylase family. PSD-B subfamily. Prokaryotic type I sub-subfamily. Heterodimer of a large membrane-associated beta subunit and a small pyruvoyl-containing alpha subunit. Pyruvate is required as a cofactor. Is synthesized initially as an inactive proenzyme. Formation of the active enzyme involves a self-maturation process in which the active site pyruvoyl group is generated from an internal serine residue via an autocatalytic post-translational modification. Two non-identical subunits are generated from the proenzyme in this reaction, and the pyruvate is formed at the N-terminus of the alpha chain, which is derived from the carboxyl end of the proenzyme. The autoendoproteolytic cleavage occurs by a canonical serine protease mechanism, in which the side chain hydroxyl group of the serine supplies its oxygen atom to form the C-terminus of the beta chain, while the remainder of the serine residue undergoes an oxidative deamination to produce ammonia and the pyruvoyl prosthetic group on the alpha chain. During this reaction, the Ser that is part of the protease active site of the proenzyme becomes the pyruvoyl prosthetic group, which constitutes an essential element of the active site of the mature decarboxylase.

It is found in the cell membrane. It carries out the reaction a 1,2-diacyl-sn-glycero-3-phospho-L-serine + H(+) = a 1,2-diacyl-sn-glycero-3-phosphoethanolamine + CO2. It participates in phospholipid metabolism; phosphatidylethanolamine biosynthesis; phosphatidylethanolamine from CDP-diacylglycerol: step 2/2. In terms of biological role, catalyzes the formation of phosphatidylethanolamine (PtdEtn) from phosphatidylserine (PtdSer). The chain is Phosphatidylserine decarboxylase proenzyme from Shewanella baltica (strain OS185).